The sequence spans 782 residues: Probable cyclic di-GMP phosphodiesterase PdeI (782 aa).

2 helical membrane-spanning segments follow: residues 12-32 and 286-306; these read LIIL…IINY and LFYL…LMTT. The 255-residue stretch at 527–781 folds into the EAL domain; that stretch reads NIWIARNIRH…AWDKSGKLVK (255 aa).

It localises to the cell membrane. The enzyme catalyses 3',3'-c-di-GMP + H2O = 5'-phosphoguanylyl(3'-&gt;5')guanosine + H(+). In terms of biological role, phosphodiesterase (PDE) that catalyzes the hydrolysis of cyclic-di-GMP (c-di-GMP) to 5'-pGpG. Overexpression reduces biofilm formation. Cyclic-di-GMP is a second messenger which controls cell surface-associated traits in bacteria. The chain is Probable cyclic di-GMP phosphodiesterase PdeI from Escherichia coli (strain K12).